Here is a 142-residue protein sequence, read N- to C-terminus: Small ribosomal subunit protein bS6 (142 aa).

Residues 110 to 133 are compositionally biased toward basic and acidic residues; sequence NKKPSHAKEKHEKTEHTHSHHTEE. The tract at residues 110–142 is disordered; it reads NKKPSHAKEKHEKTEHTHSHHTEETESVGSHSK.

Belongs to the bacterial ribosomal protein bS6 family.

In terms of biological role, binds together with bS18 to 16S ribosomal RNA. This is Small ribosomal subunit protein bS6 from Helicobacter pylori (strain Shi470).